The following is a 97-amino-acid chain: Large ribosomal subunit protein bL28 (97 aa).

It belongs to the bacterial ribosomal protein bL28 family.

The polypeptide is Large ribosomal subunit protein bL28 (Rickettsia typhi (strain ATCC VR-144 / Wilmington)).